A 493-amino-acid polypeptide reads, in one-letter code: MNSTSLYAAIDLGSNSFHMLVVREAAGSIQTLTRIKRKVRLAAGLNNDNHLSAEAMERGWQCLRLFAERLQDIPQPQIRVVATATLRLAVNAGEFIAKAQTILGCPVQVISGEEEARLIYQGVAHTTGGADQRLVVDIGGASTELVTGTGAQTTSLFSLSMGCVTWLERYFSDRNLAQENFDDAEKVARDVLRPVADELRFHGWKVCVGASGTVQALQEIMMAQGMDERITLAKLQQLKQRAIQCGRLEELEIEGLTLERALVFPSGLAILIAIFTELNIQSMTLAGGALREGLVYGMLHLAVDQDIRSRTLRNIQRRFIVDTDQANRVAKLADNFLKQVENAWHIEPISRELLLSACQLHEIGLSVDFKQAPYHAAYLVRHLDLPGYTPAQKKLLATLLLNQTNPVDLSSLHQQNAVPPRVAEQLCRLLRLAILFAGRRRDDLVPEITLQALNENLTLTLPGDWLAHHPLGKELIDQESQWQSYVHWPLDVR.

Belongs to the GppA/Ppx family. GppA subfamily.

The catalysed reaction is guanosine 3'-diphosphate 5'-triphosphate + H2O = guanosine 3',5'-bis(diphosphate) + phosphate + H(+). The protein operates within purine metabolism; ppGpp biosynthesis; ppGpp from GTP: step 2/2. In terms of biological role, catalyzes the conversion of pppGpp to ppGpp. Guanosine pentaphosphate (pppGpp) is a cytoplasmic signaling molecule which together with ppGpp controls the 'stringent response', an adaptive process that allows bacteria to respond to amino acid starvation, resulting in the coordinated regulation of numerous cellular activities. The polypeptide is Guanosine-5'-triphosphate,3'-diphosphate pyrophosphatase (Salmonella gallinarum (strain 287/91 / NCTC 13346)).